A 286-amino-acid chain; its full sequence is MQNVGFIGWRGMVGSVLMDRMVQENDFANINPIFFTTSQAGQKAPVFAGKDAGELKNAFDIEELKKLDIIVTCQGGDYTNEVYPKLKATGWNGYWIDAASALRMEKDAIIVLDPVNQHVISEGLKNGIKTFVGGNCTVSLMLMAIGGLFEKDLVEWVSVATYQAASGAGAKNMRELLSQMGELEASVKAELANPASSILEIERKVTAKMREDSFPTDNFGAPLAGSLIPWIDKLLESGQTKEEWKGYAETNKILGLSDNPIPVDGLCVRIGALRCHSQAFTIKLKK.

Residues 10 to 13 (RGMV), 37 to 38 (TS), and Q74 each bind NADP(+). Residue R103 coordinates phosphate. The active-site Acyl-thioester intermediate is the C136. Q163 contributes to the substrate binding site. NADP(+)-binding positions include 166-167 (SG) and P194. E242 lines the substrate pocket. Phosphate is bound at residue K245. Position 269 (R269) interacts with substrate. H276 acts as the Proton acceptor in catalysis.

This sequence belongs to the aspartate-semialdehyde dehydrogenase family. As to quaternary structure, homodimer.

The enzyme catalyses L-aspartate 4-semialdehyde + phosphate + NADP(+) = 4-phospho-L-aspartate + NADPH + H(+). Its pathway is amino-acid biosynthesis; L-lysine biosynthesis via DAP pathway; (S)-tetrahydrodipicolinate from L-aspartate: step 2/4. It functions in the pathway amino-acid biosynthesis; L-methionine biosynthesis via de novo pathway; L-homoserine from L-aspartate: step 2/3. It participates in amino-acid biosynthesis; L-threonine biosynthesis; L-threonine from L-aspartate: step 2/5. Functionally, catalyzes the NADPH-dependent formation of L-aspartate-semialdehyde (L-ASA) by the reductive dephosphorylation of L-aspartyl-4-phosphate. The polypeptide is Aspartate-semialdehyde dehydrogenase (asd) (Actinobacillus pleuropneumoniae (Haemophilus pleuropneumoniae)).